We begin with the raw amino-acid sequence, 362 residues long: Putative F-box/kelch-repeat protein At3g20710 (362 aa).

One can recognise an F-box domain in the interval 1–50; the sequence is MMMSNLPKDLVEEILSRVPFKYLRAIRSTCKNWYDLSKNRSFANKNIDKA. 2 Kelch repeats span residues 150 to 201 and 293 to 341; these read YDKS…VSLN and IYCR…YFKS.

The protein is Putative F-box/kelch-repeat protein At3g20710 of Arabidopsis thaliana (Mouse-ear cress).